The sequence spans 358 residues: Gap junction alpha-5 protein (358 aa).

Residues methionine 1–threonine 19 lie on the Cytoplasmic side of the membrane. Residues valine 20–alanine 40 form a helical membrane-spanning segment. Topologically, residues alanine 41 to arginine 76 are extracellular. The helical transmembrane segment at tyrosine 77 to methionine 97 threads the bilayer. At histidine 98 to glutamate 164 the chain is on the cytoplasmic side. The helical transmembrane segment at valine 165–cysteine 185 threads the bilayer. Topologically, residues arginine 186–asparagine 205 are extracellular. The helical transmembrane segment at valine 206–leucine 226 threads the bilayer. Residues tyrosine 227 to valine 358 are Cytoplasmic-facing. 2 disordered regions span residues arginine 242–threonine 262 and serine 318–valine 358. Phosphoserine occurs at positions 353 and 357.

The protein belongs to the connexin family. Alpha-type (group II) subfamily. As to quaternary structure, a connexon is composed of a hexamer of connexins. In terms of tissue distribution, abundantly expressed in the lung, also expressed in the kidney and heart.

Its subcellular location is the cell membrane. The protein resides in the cell junction. The protein localises to the gap junction. One gap junction consists of a cluster of closely packed pairs of transmembrane channels, the connexons, through which materials of low MW diffuse from one cell to a neighboring cell. The polypeptide is Gap junction alpha-5 protein (Gja5) (Mus musculus (Mouse)).